The primary structure comprises 423 residues: Imidazolonepropionase (423 aa).

Fe(3+)-binding residues include His-80 and His-82. Residues His-80 and His-82 each coordinate Zn(2+). 3 residues coordinate 4-imidazolone-5-propanoate: Arg-89, Tyr-152, and His-185. Tyr-152 serves as a coordination point for N-formimidoyl-L-glutamate. His-250 serves as a coordination point for Fe(3+). His-250 contributes to the Zn(2+) binding site. Gln-253 serves as a coordination point for 4-imidazolone-5-propanoate. Asp-325 serves as a coordination point for Fe(3+). A Zn(2+)-binding site is contributed by Asp-325. N-formimidoyl-L-glutamate contacts are provided by Asn-327 and Gly-329. Position 330 (Thr-330) interacts with 4-imidazolone-5-propanoate.

Belongs to the metallo-dependent hydrolases superfamily. HutI family. Requires Zn(2+) as cofactor. Fe(3+) serves as cofactor.

The protein localises to the cytoplasm. It catalyses the reaction 4-imidazolone-5-propanoate + H2O = N-formimidoyl-L-glutamate. It functions in the pathway amino-acid degradation; L-histidine degradation into L-glutamate; N-formimidoyl-L-glutamate from L-histidine: step 3/3. Functionally, catalyzes the hydrolytic cleavage of the carbon-nitrogen bond in imidazolone-5-propanoate to yield N-formimidoyl-L-glutamate. It is the third step in the universal histidine degradation pathway. In Cupriavidus pinatubonensis (strain JMP 134 / LMG 1197) (Cupriavidus necator (strain JMP 134)), this protein is Imidazolonepropionase.